A 144-amino-acid polypeptide reads, in one-letter code: Eukaryotic translation initiation factor 1A, X-chromosomal (144 aa).

A compositionally biased stretch (basic residues) spans 1-15 (MPKNKGKGGKNRRRG). Disordered stretches follow at residues 1–26 (MPKNKGKGGKNRRRGKNENESEKREL) and 114–144 (KINETDTFGPGDDDEIQFDDIGDDDEDIDDI). A compositionally biased stretch (basic and acidic residues) spans 16 to 26 (KNENESEKREL). An S1-like domain is found at 22–96 (EKRELVFKED…NKADVILKYN (75 aa)). Residues 124 to 144 (GDDDEIQFDDIGDDDEDIDDI) are compositionally biased toward acidic residues.

Belongs to the eIF-1A family. In terms of assembly, component of the 43S pre-initiation complex (43S PIC), which is composed of the 40S ribosomal subunit, EIF1, eIF1A (EIF1AX), eIF3 complex, EIF5 and eIF2-GTP-initiator tRNA complex (eIF2 ternary complex). Interacts with EIF5; this interaction contributes to the maintenance of EIF1 within the open 43S PIC. Interacts through its C-terminal domain (CTD) with the CTD of EIF5B; from the location of the start codon by the 43S complex until the formation of the 80S complex. As to quaternary structure, (Microbial infection) Interacts with human respiratory syncytial virus (HRSV) nucleoprotein; this interaction recruits EIF1AX to the viral replication complex to facilitate viral genomic RNA synthesis and virus production.

It localises to the cytoplasm. Functionally, component of the 43S pre-initiation complex (43S PIC), which binds to the mRNA cap-proximal region, scans mRNA 5'-untranslated region, and locates the initiation codon. This protein enhances formation of the cap-proximal complex. Together with EIF1, facilitates scanning, start codon recognition, promotion of the assembly of 48S complex at the initiation codon (43S PIC becomes 48S PIC after the start codon is reached), and dissociation of aberrant complexes. After start codon location, together with EIF5B orients the initiator methionine-tRNA in a conformation that allows 60S ribosomal subunit joining to form the 80S initiation complex. Is released after 80S initiation complex formation, just after GTP hydrolysis by EIF5B, and before release of EIF5B. Its globular part is located in the A site of the 40S ribosomal subunit. Its interaction with EIF5 during scanning contribute to the maintenance of EIF1 within the open 43S PIC. In contrast to yeast orthologs, does not bind EIF1. In Homo sapiens (Human), this protein is Eukaryotic translation initiation factor 1A, X-chromosomal (EIF1AX).